The sequence spans 29 residues: MKHSEKNEIASHELPTTPLDPVLAAGRES.

The span at 1–11 (MKHSEKNEIAS) shows a compositional bias: basic and acidic residues. The disordered stretch occupies residues 1-29 (MKHSEKNEIASHELPTTPLDPVLAAGRES).

Belongs to the [NiFe]/[NiFeSe] hydrogenase small subunit family. In terms of assembly, tetramer of an alpha and a gamma subunits (flavin-containing dimer), and a delta and a nickel-containing beta subunits (hydrogenase dimer). [4Fe-4S] cluster serves as cofactor. It depends on [3Fe-4S] cluster as a cofactor. The cofactor is [2Fe-2S] cluster. FMN is required as a cofactor. Requires Ni(2+) as cofactor.

Its subcellular location is the cytoplasm. It catalyses the reaction H2 + NAD(+) = NADH + H(+). This Rhodococcus opacus (Nocardia opaca) protein is NAD-reducing hydrogenase HoxS subunit delta (hoxY).